A 171-amino-acid chain; its full sequence is Adenine phosphoribosyltransferase (171 aa).

The protein belongs to the purine/pyrimidine phosphoribosyltransferase family. Homodimer.

Its subcellular location is the cytoplasm. The catalysed reaction is AMP + diphosphate = 5-phospho-alpha-D-ribose 1-diphosphate + adenine. It functions in the pathway purine metabolism; AMP biosynthesis via salvage pathway; AMP from adenine: step 1/1. Catalyzes a salvage reaction resulting in the formation of AMP, that is energically less costly than de novo synthesis. This Mesomycoplasma hyopneumoniae (strain 232) (Mycoplasma hyopneumoniae) protein is Adenine phosphoribosyltransferase.